A 145-amino-acid chain; its full sequence is MPKIKTSRVKYPGGWELIEPTIRELDAKMREAENDTHDGKRKCEALWPIFRISHQRSRYIYDLYYRRKEISKELYEFCLDQGYADRNLIAKWKKPGYERLCCLRCIQTRDHNFATTCVCRVPKHLREEKVIECVHCGCRGCASGD.

This sequence belongs to the BUD31 (G10) family.

Its subcellular location is the nucleus. This Oryza sativa subsp. japonica (Rice) protein is Protein BUD31 homolog 1.